We begin with the raw amino-acid sequence, 251 residues long: Hydroxyacylglutathione hydrolase (251 aa).

Zn(2+) is bound by residues H59, H61, D63, H64, H118, D141, and H179.

This sequence belongs to the metallo-beta-lactamase superfamily. Glyoxalase II family. As to quaternary structure, monomer. Requires Zn(2+) as cofactor.

The catalysed reaction is an S-(2-hydroxyacyl)glutathione + H2O = a 2-hydroxy carboxylate + glutathione + H(+). The protein operates within secondary metabolite metabolism; methylglyoxal degradation; (R)-lactate from methylglyoxal: step 2/2. Functionally, thiolesterase that catalyzes the hydrolysis of S-D-lactoyl-glutathione to form glutathione and D-lactic acid. The polypeptide is Hydroxyacylglutathione hydrolase (Prochlorococcus marinus (strain NATL1A)).